Consider the following 319-residue polypeptide: HTH-type transcriptional regulator YidZ (319 aa).

The HTH lysR-type domain maps to 8 to 65 (LDLNLLLCLQLLMQERSVTKAAKRMNVTPSAVSKSLAKLRAWFDDPLFVNSPLGLSPT). The H-T-H motif DNA-binding region spans 25–44 (VTKAAKRMNVTPSAVSKSLA).

The protein belongs to the LysR transcriptional regulatory family.

Involved in anaerobic NO protection. This Escherichia coli O6:H1 (strain CFT073 / ATCC 700928 / UPEC) protein is HTH-type transcriptional regulator YidZ.